The sequence spans 539 residues: Protein mushroom body miniature (539 aa).

Positions Met1 to Asn11 are enriched in polar residues. The interval Met1–Lys345 is disordered. The segment covering Lys67–Gln79 has biased composition (basic and acidic residues). A compositionally biased stretch (basic residues) spans Pro80–Arg89. A compositionally biased stretch (gly residues) spans Gly90–Arg101. Residues Ile199–Lys208 show a composition bias toward basic and acidic residues. A compositionally biased stretch (low complexity) spans Val268–Asp289. A phosphoserine mark is found at Ser288 and Ser290. Thr292 and Thr327 each carry phosphothreonine. Residues Thr327 to Glu336 are compositionally biased toward acidic residues. A Phosphoserine modification is found at Ser332. Phosphothreonine is present on Thr333. 2 CCHC-type zinc fingers span residues Cys354–Cys367 and Cys371–Asn386. Residues Val421–Pro513 are disordered. Over residues Lys428 to Arg447 the composition is skewed to basic residues. Positions Asp456–Ser480 are enriched in acidic residues.

May be phosphorylated in vivo by CkIIalpha. mbm and CkIIalpha colocalize to the nucleolus and mbm is phosphorylated in vitro by CkIIalpha. As to expression, shows widespread expression in third instar larval brain with no apparent difference between males and females (at protein level). Detected at low levels in the mushroom body neuropil and is also expressed in many cells of the brain outside the mushroom body (at protein level). Not detected in third instar larval brain cells in anaphase (at protein level).

The protein resides in the nucleus. Its subcellular location is the nucleolus. It localises to the cytoplasm. Its function is as follows. Required for small ribosomal subunit biogenesis in neuroblasts. Plays a role in mushroom body development. The protein is Protein mushroom body miniature of Drosophila melanogaster (Fruit fly).